Here is a 500-residue protein sequence, read N- to C-terminus: MGPGGRQSAEPASTEVFGDSDFVVVANRLPVDQERLPDGTIAWKRSPGGLVTALEPLLRRRRGAWVGWAGVVENDVDVQDEPIVQDELQLQPVRLSADDVAQYYEGFSNATLWPLYHDVIVRPIYHREWWDRYVDVNRRFAEATARAAARGGTVWVQDYQLQLVPKMLRAMRPDLTIGFFLHIPFPPVELFMQLPWRTEIIQGLLGADLVGFHLPGGAQNFLILSRRLVGADTSRGTVGVRSRFGEVILGSRTIRVGAFPISIDSGALDQTARDRNIRRRSREIRAELGNPRKILLGVDRLDYTKGIDVRLKAFSELLAEGRVKRDDTVLVQLATPSRERVESYQTLRNDIERQVGHINGEYAEVGHPVVHYLHRPVPRNELIAFFVASDVMLVTPLRDGMNLVAKEYVACRSDLGGALVLSEFTGAAAELRHAYLVNPHDLEGVNDGIEEALNQTEEAGRRRMRSMRRQVLAHDVDRWARSFLDALADSRPNDSADAAD.

Residue R28 coordinates D-glucose 6-phosphate. 48 to 49 (GG) lines the UDP-alpha-D-glucose pocket. D-glucose 6-phosphate is bound by residues Y104 and D158. The UDP-alpha-D-glucose site is built by R300 and K305. R338 provides a ligand contact to D-glucose 6-phosphate. 403–407 (LVAKE) provides a ligand contact to UDP-alpha-D-glucose.

This sequence belongs to the glycosyltransferase 20 family. As to quaternary structure, homotetramer.

It catalyses the reaction ADP-alpha-D-glucose + D-glucose 6-phosphate = alpha,alpha-trehalose 6-phosphate + ADP + H(+). The catalysed reaction is CDP-alpha-D-glucose + D-glucose 6-phosphate = alpha,alpha-trehalose 6-phosphate + CDP + H(+). It carries out the reaction GDP-alpha-D-glucose + D-glucose 6-phosphate = alpha,alpha-trehalose 6-phosphate + GDP + H(+). The enzyme catalyses TDP-alpha-D-glucose + D-glucose 6-phosphate = 5-methyl-UDP + alpha,alpha-trehalose 6-phosphate + H(+). It catalyses the reaction D-glucose 6-phosphate + UDP-alpha-D-glucose = alpha,alpha-trehalose 6-phosphate + UDP + H(+). It participates in glycan biosynthesis; trehalose biosynthesis. Probably involved in the osmoprotection via the biosynthesis of trehalose and in the production of glycogen and alpha-glucan via the TreS-Pep2 branch involved in the biosynthesis of maltose-1-phosphate (M1P). Catalyzes the transfer of glucose from UDP-glucose (UDP-Glc) to D-glucose 6-phosphate (Glc-6-P) to form trehalose-6-phosphate. Probably also able to use ADP-Glc, CDP-Glc, GDP-Glc and TDP-Glc as glucosyl donors. This is Trehalose-6-phosphate synthase from Mycobacterium ulcerans (strain Agy99).